A 238-amino-acid chain; its full sequence is NADH-quinone oxidoreductase subunit I (238 aa).

4Fe-4S ferredoxin-type domains follow at residues 81 to 111 (LVPR…IEAG) and 123 to 152 (VKFV…MDSG). Residues C91, C94, C97, C101, C132, C135, C138, and C142 each contribute to the [4Fe-4S] cluster site.

Belongs to the complex I 23 kDa subunit family. In terms of assembly, NDH-1 is composed of 14 different subunits. Subunits NuoA, H, J, K, L, M, N constitute the membrane sector of the complex. Requires [4Fe-4S] cluster as cofactor.

Its subcellular location is the cell inner membrane. The enzyme catalyses a quinone + NADH + 5 H(+)(in) = a quinol + NAD(+) + 4 H(+)(out). Functionally, NDH-1 shuttles electrons from NADH, via FMN and iron-sulfur (Fe-S) centers, to quinones in the respiratory chain. The immediate electron acceptor for the enzyme in this species is believed to be ubiquinone. Couples the redox reaction to proton translocation (for every two electrons transferred, four hydrogen ions are translocated across the cytoplasmic membrane), and thus conserves the redox energy in a proton gradient. The polypeptide is NADH-quinone oxidoreductase subunit I (Anaeromyxobacter sp. (strain Fw109-5)).